The primary structure comprises 98 residues: ESAT-6-like protein EsxM (98 aa).

It belongs to the WXG100 family. CFP-10 subfamily.

The protein localises to the secreted. Alters the host macrophage cytoskeleton and enhances macrophage motility. Promotes granuloma efflux, extrapulmonary dissemination of infection and bone disease. The sequence is that of ESAT-6-like protein EsxM from Mycobacterium marinum (strain ATCC BAA-535 / M).